A 342-amino-acid polypeptide reads, in one-letter code: Probable dual-specificity RNA methyltransferase RlmN (342 aa).

Glu-91 serves as the catalytic Proton acceptor. Residues Tyr-97 to Asp-326 enclose the Radical SAM core domain. The cysteines at positions 104 and 331 are disulfide-linked. Residues Cys-111, Cys-115, and Cys-118 each coordinate [4Fe-4S] cluster. Residues Gly-157–Glu-158, Ser-189, Ser-212–His-214, and Asn-288 contribute to the S-adenosyl-L-methionine site. Cys-331 functions as the S-methylcysteine intermediate in the catalytic mechanism.

It belongs to the radical SAM superfamily. RlmN family. [4Fe-4S] cluster serves as cofactor.

It is found in the cytoplasm. The catalysed reaction is adenosine(2503) in 23S rRNA + 2 reduced [2Fe-2S]-[ferredoxin] + 2 S-adenosyl-L-methionine = 2-methyladenosine(2503) in 23S rRNA + 5'-deoxyadenosine + L-methionine + 2 oxidized [2Fe-2S]-[ferredoxin] + S-adenosyl-L-homocysteine. It carries out the reaction adenosine(37) in tRNA + 2 reduced [2Fe-2S]-[ferredoxin] + 2 S-adenosyl-L-methionine = 2-methyladenosine(37) in tRNA + 5'-deoxyadenosine + L-methionine + 2 oxidized [2Fe-2S]-[ferredoxin] + S-adenosyl-L-homocysteine. Its function is as follows. Specifically methylates position 2 of adenine 2503 in 23S rRNA and position 2 of adenine 37 in tRNAs. The sequence is that of Probable dual-specificity RNA methyltransferase RlmN from Caldanaerobacter subterraneus subsp. tengcongensis (strain DSM 15242 / JCM 11007 / NBRC 100824 / MB4) (Thermoanaerobacter tengcongensis).